The following is a 367-amino-acid chain: 2-aminoethylphosphonate--pyruvate transaminase (367 aa).

Lys-194 carries the N6-(pyridoxal phosphate)lysine modification.

This sequence belongs to the class-V pyridoxal-phosphate-dependent aminotransferase family. PhnW subfamily. Homodimer. It depends on pyridoxal 5'-phosphate as a cofactor.

The catalysed reaction is (2-aminoethyl)phosphonate + pyruvate = phosphonoacetaldehyde + L-alanine. Functionally, involved in phosphonate degradation. This is 2-aminoethylphosphonate--pyruvate transaminase from Salmonella agona (strain SL483).